The following is a 317-amino-acid chain: Hps1-dma1 cluster cytochrome P450 monooxygenase cyp3.1 (317 aa).

Residues 183-205 are disordered; the sequence is PAIETDRKTSSHSRSPTALADKQ. Residue Cys-260 coordinates heme.

It belongs to the cytochrome P450 family. Heme serves as cofactor.

Its pathway is secondary metabolite biosynthesis. In terms of biological role, cytochrome P450 monooxygenase; part of the hps1-dma1 gene cluster that probably mediates the biosynthesis a derivative of cyclopiazonic acid (CPA). The hybrid polyketide synthase-nonribosomal peptide synthetase (PKS-NRPS) nps1 might incorporates acetyl-CoA, malonyl-CoA, and tryptophan (Trp) and utilizes a C-terminal redox-incompetent reductase domain to make and release the tryptophan tetramic acid, cyclo-acetoacetyl-L-tryptophan (c-AATrp), as the first intermediate in the pathway. In addition, the cluster also includes the tryptophan dimethylallyltransferase dma1, the FAD-dependent oxidoreductase toxD, the cytochrome P450 monooxygenase cyp3.1 and the methyltransferase DOTSEDRAFT_139328; the latter 2 being not present in all CPA-producing fungi but involved in additional modifications that occur in biosynthesis the of a range of CPA and CPA-like products. Further studies are required to clarify whether the CPA-like hps1-dma1 cluster is functional or a non-functional relic reflecting evolution of D.septosporum. This chain is Hps1-dma1 cluster cytochrome P450 monooxygenase cyp3.1 (cyp3.1), found in Dothistroma septosporum (strain NZE10 / CBS 128990) (Red band needle blight fungus).